The chain runs to 272 residues: Shikimate dehydrogenase (NADP(+)) (272 aa).

Residues 14-16 (SKS) and Thr-61 contribute to the shikimate site. Lys-65 acts as the Proton acceptor in catalysis. Glu-77 contacts NADP(+). Shikimate-binding residues include Asn-86 and Asp-102. NADP(+)-binding positions include 126–130 (GAGGA), 149–154 (NRTFSR), and Met-213. Tyr-215 contributes to the shikimate binding site. Gly-237 is a binding site for NADP(+).

Belongs to the shikimate dehydrogenase family. As to quaternary structure, homodimer.

It carries out the reaction shikimate + NADP(+) = 3-dehydroshikimate + NADPH + H(+). Its pathway is metabolic intermediate biosynthesis; chorismate biosynthesis; chorismate from D-erythrose 4-phosphate and phosphoenolpyruvate: step 4/7. Its function is as follows. Involved in the biosynthesis of the chorismate, which leads to the biosynthesis of aromatic amino acids. Catalyzes the reversible NADPH linked reduction of 3-dehydroshikimate (DHSA) to yield shikimate (SA). The protein is Shikimate dehydrogenase (NADP(+)) of Photorhabdus laumondii subsp. laumondii (strain DSM 15139 / CIP 105565 / TT01) (Photorhabdus luminescens subsp. laumondii).